The following is a 189-amino-acid chain: Methylated-DNA--protein-cysteine methyltransferase (189 aa).

Residues Tyr-128 and Arg-142 each coordinate DNA. The active-site Nucleophile; methyl group acceptor is the Cys-159. DNA is bound at residue Ser-165.

It belongs to the MGMT family.

The protein localises to the nucleus. The enzyme catalyses a 6-O-methyl-2'-deoxyguanosine in DNA + L-cysteinyl-[protein] = S-methyl-L-cysteinyl-[protein] + a 2'-deoxyguanosine in DNA. It carries out the reaction a 4-O-methyl-thymidine in DNA + L-cysteinyl-[protein] = a thymidine in DNA + S-methyl-L-cysteinyl-[protein]. Involved in the cellular defense against the biological effects of O6-methylguanine (O6-MeG) and O4-methylthymine (O4-MeT) in DNA. Repairs the methylated nucleobase in DNA by stoichiometrically transferring the methyl group to a cysteine residue in the enzyme. This is a suicide reaction: the enzyme is irreversibly inactivated. In Kluyveromyces lactis (strain ATCC 8585 / CBS 2359 / DSM 70799 / NBRC 1267 / NRRL Y-1140 / WM37) (Yeast), this protein is Methylated-DNA--protein-cysteine methyltransferase (MGT1).